We begin with the raw amino-acid sequence, 509 residues long: UDP-N-acetylmuramoyl-L-alanyl-D-glutamate--2,6-diaminopimelate ligase (509 aa).

Serine 32 is a binding site for UDP-N-acetyl-alpha-D-muramoyl-L-alanyl-D-glutamate. Glycine 117–threonine 123 contacts ATP. UDP-N-acetyl-alpha-D-muramoyl-L-alanyl-D-glutamate-binding positions include threonine 159–threonine 160, serine 186, glutamine 192, and arginine 194. An N6-carboxylysine modification is found at lysine 226. Meso-2,6-diaminopimelate-binding positions include arginine 401, aspartate 425–arginine 428, glycine 476, and glutamate 480. A Meso-diaminopimelate recognition motif motif is present at residues aspartate 425–arginine 428.

It belongs to the MurCDEF family. MurE subfamily. Mg(2+) is required as a cofactor. Post-translationally, carboxylation is probably crucial for Mg(2+) binding and, consequently, for the gamma-phosphate positioning of ATP.

It is found in the cytoplasm. The catalysed reaction is UDP-N-acetyl-alpha-D-muramoyl-L-alanyl-D-glutamate + meso-2,6-diaminopimelate + ATP = UDP-N-acetyl-alpha-D-muramoyl-L-alanyl-gamma-D-glutamyl-meso-2,6-diaminopimelate + ADP + phosphate + H(+). It functions in the pathway cell wall biogenesis; peptidoglycan biosynthesis. Functionally, catalyzes the addition of meso-diaminopimelic acid to the nucleotide precursor UDP-N-acetylmuramoyl-L-alanyl-D-glutamate (UMAG) in the biosynthesis of bacterial cell-wall peptidoglycan. In Prochlorococcus marinus (strain NATL2A), this protein is UDP-N-acetylmuramoyl-L-alanyl-D-glutamate--2,6-diaminopimelate ligase.